The primary structure comprises 302 residues: Vacuolar protein sorting-associated protein 26A (302 aa).

It belongs to the VPS26 family. As to quaternary structure, component of the retromer complex which consists of VPS29 (MAG1), VPS26 (VPS26A or VPS26B), VPS35 (VPS35A or VPS35B or VPS35C), VPS5/17 (SNX1 or SNX2A or SNX2B). Component of a retromer subcomplex consisting of VPS29 (MAG1), VPS26 (VPS26A or VPS26B), VPS35 (VPS35A or VPS35B or VPS35C).

The protein resides in the cytoplasm. The protein localises to the endosome membrane. It localises to the prevacuolar compartment membrane. Its subcellular location is the golgi apparatus. It is found in the trans-Golgi network membrane. In terms of biological role, plays a role in vesicular protein sorting. Component of the membrane-associated retromer complex which is essential in endosome-to-Golgi retrograde transport. The VPS29-VPS26-VPS35 subcomplex may be involved in recycling of specific cargos from endosome to the plasma membrane. This Arabidopsis thaliana (Mouse-ear cress) protein is Vacuolar protein sorting-associated protein 26A (VPS26A).